Reading from the N-terminus, the 70-residue chain is Cold shock-like protein CspB (70 aa).

The CSD domain occupies 7-67 (GLVKWFDAGK…GQKGPSAVNV (61 aa)).

The protein resides in the cytoplasm. The chain is Cold shock-like protein CspB (cspB) from Yersinia enterocolitica.